The primary structure comprises 130 residues: Small ribosomal subunit protein uS11 (130 aa).

This sequence belongs to the universal ribosomal protein uS11 family. As to quaternary structure, part of the 30S ribosomal subunit. Interacts with proteins S7 and S18. Binds to IF-3.

In terms of biological role, located on the platform of the 30S subunit, it bridges several disparate RNA helices of the 16S rRNA. Forms part of the Shine-Dalgarno cleft in the 70S ribosome. This Prochlorococcus marinus subsp. pastoris (strain CCMP1986 / NIES-2087 / MED4) protein is Small ribosomal subunit protein uS11.